Consider the following 244-residue polypeptide: 5-oxoprolinase subunit A (244 aa).

Belongs to the LamB/PxpA family. Forms a complex composed of PxpA, PxpB and PxpC.

It catalyses the reaction 5-oxo-L-proline + ATP + 2 H2O = L-glutamate + ADP + phosphate + H(+). Catalyzes the cleavage of 5-oxoproline to form L-glutamate coupled to the hydrolysis of ATP to ADP and inorganic phosphate. In Shigella boydii serotype 18 (strain CDC 3083-94 / BS512), this protein is 5-oxoprolinase subunit A.